The primary structure comprises 156 residues: Cellulose synthase operon protein D (156 aa).

Its pathway is glycan metabolism; bacterial cellulose biosynthesis. May have a major role in the perfection of crystallization, involved either in the pore structure itself or in the organization of the pores within the linear array of terminal synthesizing complexes (TCs). The protein is Cellulose synthase operon protein D (bcsDI) of Komagataeibacter xylinus (Gluconacetobacter xylinus).